Consider the following 241-residue polypeptide: Anthocyanidin 3-O-glucosyltransferase 4 (241 aa).

Residues Gln104, His119, Trp122, Asn123, Ser124, and Glu127 each coordinate UDP-alpha-D-glucose. Ala142 is an an anthocyanidin binding site. UDP-alpha-D-glucose-binding residues include Glu143 and Gln144.

The protein belongs to the UDP-glycosyltransferase family. In terms of tissue distribution, faintly expressed in cotyledons, roots and leaves.

It catalyses the reaction an anthocyanidin + UDP-alpha-D-glucose + H(+) = an anthocyanidin 3-O-beta-D-glucoside + UDP. It functions in the pathway pigment biosynthesis; anthocyanin biosynthesis. Functionally, in the presence of other necessary color factors, this glycosylation reaction allows the accumulation of anthocyanin pigments. The chain is Anthocyanidin 3-O-glucosyltransferase 4 (GT4) from Manihot esculenta (Cassava).